A 208-amino-acid polypeptide reads, in one-letter code: Uracil phosphoribosyltransferase (208 aa).

5-phospho-alpha-D-ribose 1-diphosphate-binding positions include Arg78, Arg103, and 130–138 (DPMLATGGT). Residues Ile193 and 198–200 (GDA) contribute to the uracil site. Asp199 serves as a coordination point for 5-phospho-alpha-D-ribose 1-diphosphate.

The protein belongs to the UPRTase family. Mg(2+) serves as cofactor.

It carries out the reaction UMP + diphosphate = 5-phospho-alpha-D-ribose 1-diphosphate + uracil. It functions in the pathway pyrimidine metabolism; UMP biosynthesis via salvage pathway; UMP from uracil: step 1/1. Allosterically activated by GTP. Catalyzes the conversion of uracil and 5-phospho-alpha-D-ribose 1-diphosphate (PRPP) to UMP and diphosphate. This Solidesulfovibrio magneticus (strain ATCC 700980 / DSM 13731 / RS-1) (Desulfovibrio magneticus) protein is Uracil phosphoribosyltransferase.